Consider the following 267-residue polypeptide: L-erythrulose-1-phosphate isomerase (267 aa).

Catalysis depends on H95, which acts as the Electrophile. E168 functions as the Proton acceptor in the catalytic mechanism. Substrate is bound by residues G174 and S211.

This sequence belongs to the triosephosphate isomerase family. Homodimer.

The protein localises to the cytoplasm. It carries out the reaction L-erythrulose 1-phosphate = D-erythrulose 4-phosphate. It functions in the pathway carbohydrate metabolism; erythritol degradation. Catalyzes the isomerization of D-erythrulose-4P to L-erythrulose-1P. The sequence is that of L-erythrulose-1-phosphate isomerase from Rhizobium etli (strain ATCC 51251 / DSM 11541 / JCM 21823 / NBRC 15573 / CFN 42).